A 130-amino-acid chain; its full sequence is Small ribosomal subunit protein uS8 (130 aa).

Belongs to the universal ribosomal protein uS8 family. In terms of assembly, part of the 30S ribosomal subunit. Contacts proteins S5 and S12.

Its function is as follows. One of the primary rRNA binding proteins, it binds directly to 16S rRNA central domain where it helps coordinate assembly of the platform of the 30S subunit. This Moorella thermoacetica (strain ATCC 39073 / JCM 9320) protein is Small ribosomal subunit protein uS8.